Here is a 248-residue protein sequence, read N- to C-terminus: L-seryl-tRNA(Sec) kinase (248 aa).

7–14 (GLPGVGKS) is an ATP binding site.

The protein belongs to the L-seryl-tRNA(Sec) kinase family.

It catalyses the reaction L-seryl-tRNA(Sec) + ATP = O-phospho-L-seryl-tRNA(Sec) + ADP. The protein operates within aminoacyl-tRNA biosynthesis; selenocysteinyl-tRNA(Sec) biosynthesis; selenocysteinyl-tRNA(Sec) from L-seryl-tRNA(Sec) (archaeal/eukaryal route): step 1/2. Its function is as follows. Specifically phosphorylates seryl-tRNA(Sec) to O-phosphoseryl-tRNA(Sec), an activated intermediate for selenocysteine biosynthesis. The polypeptide is L-seryl-tRNA(Sec) kinase (pstK) (Methanocaldococcus jannaschii (strain ATCC 43067 / DSM 2661 / JAL-1 / JCM 10045 / NBRC 100440) (Methanococcus jannaschii)).